Reading from the N-terminus, the 239-residue chain is Fatty acid metabolism regulator protein (239 aa).

Positions 6–74 (QSPAGFAEEY…HGKPTKVNNF (69 aa)) constitute an HTH gntR-type domain. Positions 34–53 (ERELSELIGVTRTTLREVLQ) form a DNA-binding region, H-T-H motif.

Homodimer.

It is found in the cytoplasm. Functionally, multifunctional regulator of fatty acid metabolism. The sequence is that of Fatty acid metabolism regulator protein from Serratia proteamaculans (strain 568).